We begin with the raw amino-acid sequence, 108 residues long: Small ribosomal subunit protein bS18 (108 aa).

A compositionally biased stretch (polar residues) spans 1–12; sequence MSDITKQPANNI. The tract at residues 1–33 is disordered; it reads MSDITKQPANNISSDDKKEVAKASAKSSVEGAK.

Belongs to the bacterial ribosomal protein bS18 family. As to quaternary structure, part of the 30S ribosomal subunit. Forms a tight heterodimer with protein bS6.

Functionally, binds as a heterodimer with protein bS6 to the central domain of the 16S rRNA, where it helps stabilize the platform of the 30S subunit. The chain is Small ribosomal subunit protein bS18 from Mycoplasmoides gallisepticum (strain R(low / passage 15 / clone 2)) (Mycoplasma gallisepticum).